The sequence spans 414 residues: 2,3-diketo-5-methylthiopentyl-1-phosphate enolase (414 aa).

The active-site Proton acceptor is Lys99. Residues Lys148, 174 to 177 (KDDE), His265, Gly338, and 360 to 361 (GG) each bind substrate. Lys174, Asp176, and Glu177 together coordinate Mg(2+). An N6-carboxylysine modification is found at Lys174.

It belongs to the RuBisCO large chain family. Type IV subfamily. In terms of assembly, homodimer. It depends on Mg(2+) as a cofactor.

The enzyme catalyses 5-methylsulfanyl-2,3-dioxopentyl phosphate = 2-hydroxy-5-methylsulfanyl-3-oxopent-1-enyl phosphate. The protein operates within amino-acid biosynthesis; L-methionine biosynthesis via salvage pathway; L-methionine from S-methyl-5-thio-alpha-D-ribose 1-phosphate: step 3/6. Catalyzes the enolization of 2,3-diketo-5-methylthiopentyl-1-phosphate (DK-MTP-1-P) into 2-hydroxy-3-keto-5-methylthiopentenyl-1-phosphate (HK-MTPenyl-1-P). The sequence is that of 2,3-diketo-5-methylthiopentyl-1-phosphate enolase from Bacillus cereus (strain ZK / E33L).